A 361-amino-acid polypeptide reads, in one-letter code: tRNA/tmRNA (uracil-C(5))-methyltransferase (361 aa).

Residues glutamine 185, tyrosine 213, asparagine 218, glutamate 234, and aspartate 294 each contribute to the S-adenosyl-L-methionine site. Catalysis depends on cysteine 319, which acts as the Nucleophile. The active-site Proton acceptor is the glutamate 353.

The protein belongs to the class I-like SAM-binding methyltransferase superfamily. RNA M5U methyltransferase family. TrmA subfamily.

It catalyses the reaction uridine(54) in tRNA + S-adenosyl-L-methionine = 5-methyluridine(54) in tRNA + S-adenosyl-L-homocysteine + H(+). It carries out the reaction uridine(341) in tmRNA + S-adenosyl-L-methionine = 5-methyluridine(341) in tmRNA + S-adenosyl-L-homocysteine + H(+). In terms of biological role, dual-specificity methyltransferase that catalyzes the formation of 5-methyluridine at position 54 (m5U54) in all tRNAs, and that of position 341 (m5U341) in tmRNA (transfer-mRNA). This chain is tRNA/tmRNA (uracil-C(5))-methyltransferase, found in Pseudomonas putida (strain ATCC 47054 / DSM 6125 / CFBP 8728 / NCIMB 11950 / KT2440).